The chain runs to 291 residues: MGGRYDRNTFDEQDEVNPFANPGSVPAASNSRLSPLPPEPAGFGYGRTVDIPLDRPGSGAQDLKKKEKELQAKEADLRRREQDLKRKQDAAARAGIVIEAKNWPTFFPLIHHDIANEILVRLQRLQYIAFATYLGLVLALFWNIIAVTTAWIKGEGVTIWLLAVIYFISGVPGGYVLWYRPLYRAFRSDSAFNFGWFFLFYMLHILFCLFAAVAPPIVFKGKSLAGILPAIDVLSAQALVGIFYFIGFGLFCLESVVSIWVIQQVYMYFRGSGKADDMRRDAARGAMRAAI.

The span at M1–F10 shows a compositional bias: basic and acidic residues. The segment at M1–K66 is disordered. The Cytoplasmic segment spans residues M1–Q126. Residue S34 is modified to Phosphoserine. The stretch at S58 to A94 forms a coiled coil. 4 helical membrane passes run Y127–V147, I159–Y179, F194–A214, and I242–I262. The Cytoplasmic portion of the chain corresponds to Q263–R288.

This sequence belongs to the SCAMP family.

It is found in the cell membrane. Its subcellular location is the cytoplasmic vesicle. It localises to the secretory vesicle membrane. In terms of biological role, probably involved in membrane trafficking. In Arabidopsis thaliana (Mouse-ear cress), this protein is Secretory carrier-associated membrane protein 5 (SCAMP5).